The primary structure comprises 339 residues: RNA polymerase II holoenzyme cyclin-like subunit (339 aa).

Positions 48-67 are disordered; it reads PNSADSSNGNAANNGGGNGR. Positions 49–60 are enriched in low complexity; the sequence is NSADSSNGNAAN. The Cyclin N-terminal domain occupies 93-194; it reads RIYCYFLIMK…LIEELQCYLI (102 aa).

This sequence belongs to the cyclin family. Cyclin C subfamily. Component of the SRB8-11 complex, a regulatory module of the Mediator complex.

It localises to the nucleus. Functionally, component of the SRB8-11 complex. The SRB8-11 complex is a regulatory module of the Mediator complex which is itself involved in regulation of basal and activated RNA polymerase II-dependent transcription. The SRB8-11 complex may be involved in the transcriptional repression of a subset of genes regulated by Mediator. It may inhibit the association of the Mediator complex with RNA polymerase II to form the holoenzyme complex. The SRB8-11 complex phosphorylates the C-terminal domain (CTD) of the largest subunit of RNA polymerase II. This is RNA polymerase II holoenzyme cyclin-like subunit (SSN8) from Candida glabrata (strain ATCC 2001 / BCRC 20586 / JCM 3761 / NBRC 0622 / NRRL Y-65 / CBS 138) (Yeast).